A 316-amino-acid polypeptide reads, in one-letter code: Coiled-coil domain-containing protein 42 (316 aa).

Coiled coils occupy residues 39 to 146 and 178 to 232; these read SPSI…SAKL and LVSM…DRAR.

This sequence belongs to the CFAP73 family. In terms of assembly, interacts with ODF1 and ODF2. Interacts with CCDC38. Interacts with CCDC146. Interacts with CFAP53.

Its subcellular location is the cytoplasm. The protein resides in the perinuclear region. It is found in the cytoskeleton. The protein localises to the cell projection. It localises to the cilium. Its subcellular location is the flagellum. The protein resides in the microtubule organizing center. It is found in the centrosome. Functionally, essential for male fertility. Required for sperm development. The sequence is that of Coiled-coil domain-containing protein 42 from Homo sapiens (Human).